Consider the following 299-residue polypeptide: Putative zinc-binding protein ORF12 (299 aa).

The sequence is that of Putative zinc-binding protein ORF12 (ORF12) from Ictaluridae (bullhead catfishes).